We begin with the raw amino-acid sequence, 211 residues long: LexA repressor (211 aa).

Residues 35-55 (RAEIANFFGFKSANAAEEHLK) constitute a DNA-binding region (H-T-H motif). Active-site for autocatalytic cleavage activity residues include Ser128 and Lys165.

Belongs to the peptidase S24 family. In terms of assembly, homodimer.

It carries out the reaction Hydrolysis of Ala-|-Gly bond in repressor LexA.. Functionally, represses a number of genes involved in the response to DNA damage (SOS response), including recA and lexA. In the presence of single-stranded DNA, RecA interacts with LexA causing an autocatalytic cleavage which disrupts the DNA-binding part of LexA, leading to derepression of the SOS regulon and eventually DNA repair. This Colwellia psychrerythraea (strain 34H / ATCC BAA-681) (Vibrio psychroerythus) protein is LexA repressor.